Here is a 395-residue protein sequence, read N- to C-terminus: Neuromedin-U receptor 2 (395 aa).

Topologically, residues 1-41 (MGKLENASWIHDPLMKYLNSTEEYLAHLCGPKRSDLSLPVS) are extracellular. N-linked (GlcNAc...) asparagine glycosylation is found at Asn-6 and Asn-19. A helical membrane pass occupies residues 42 to 62 (VAYALIFLVGVMGNLLVCMVI). Residues 63–74 (VRHQTLKTPTNY) are Cytoplasmic-facing. The chain crosses the membrane as a helical span at residues 75–95 (YLFSLAVSDLLVLLLGMPLEI). Over 96 to 115 (YEMWHNYPFLFGPVGCYFKT) the chain is Extracellular. Cys-111 and Cys-196 are disulfide-bonded. The helical transmembrane segment at 116–138 (ALFETVCFASILSVTTVSVERYV) threads the bilayer. At 139 to 157 (AIVHPFRAKLESTRRRALR) the chain is on the cytoplasmic side. A helical membrane pass occupies residues 158 to 178 (ILSLVWSFSVVFSLPNTSIHG). Residues 179 to 212 (IKFQHFPNGSSVPGSATCTVTKPMWVYNLIIQAT) lie on the Extracellular side of the membrane. An N-linked (GlcNAc...) asparagine glycan is attached at Asn-186. The helical transmembrane segment at 213-233 (SFLFYILPMTLISVLYYLMGL) threads the bilayer. Over 234–257 (RLKRDESLEANKVAVNIHRPSRKS) the chain is Cytoplasmic. Residues 258–278 (VTKMLFVLVLVFAICWTPFHV) traverse the membrane as a helical segment. Residues 279-293 (DRLFFSFVEEWTESL) are Extracellular-facing. A helical transmembrane segment spans residues 294 to 314 (AAVFNLIHVVSGVFFYLSSAV). The Cytoplasmic portion of the chain corresponds to 315–395 (NPIIYNLLSR…TTAPCAGEVP (81 aa)). Positions 374–395 (FPGQSSIHNTNLTTAPCAGEVP) are disordered. Residues 375–387 (PGQSSIHNTNLTT) show a composition bias toward polar residues.

Belongs to the G-protein coupled receptor 1 family. In terms of tissue distribution, the highest level is detected in the uterus. In the central nervous system, high expression levels were found in the hypothalamus and moderate levels in both the medulla oblongata and spinal cord. Expressed in the hypothalamic paraventricular nucleus (PVN) and suprachiasmatic nuclei (SCN) of the hypothalamus. Expression is low in the gastrointestinal tract. In other peripheral tissues, moderate expression was observed in the lung and ovary.

It is found in the cell membrane. Functionally, receptor for the neuromedin-U and neuromedin-S neuropeptides. This Rattus norvegicus (Rat) protein is Neuromedin-U receptor 2 (Nmur2).